A 359-amino-acid chain; its full sequence is Peptide chain release factor 1 (359 aa).

At Gln-236 the chain carries N5-methylglutamine. Positions Gln-288–Arg-307 are disordered. Basic and acidic residues predominate over residues Ala-293–Arg-307.

It belongs to the prokaryotic/mitochondrial release factor family. Post-translationally, methylated by PrmC. Methylation increases the termination efficiency of RF1.

The protein resides in the cytoplasm. Its function is as follows. Peptide chain release factor 1 directs the termination of translation in response to the peptide chain termination codons UAG and UAA. In Streptococcus sanguinis (strain SK36), this protein is Peptide chain release factor 1.